The primary structure comprises 70 residues: Cytochrome c oxidase subunit 8B, mitochondrial (70 aa).

The N-terminal 24 residues, 1–24 (MLRLAPTVRLLQAPLRGWAVPKAH), are a transit peptide targeting the mitochondrion. Over 25–35 (ITAKPAKTPTS) the chain is Mitochondrial matrix. The helical transmembrane segment at 36–59 (PKEQAIGLSVTFLSFLLPAGWVLY) threads the bilayer. At 60-70 (HLDNYKKSSAA) the chain is on the mitochondrial intermembrane side.

This sequence belongs to the cytochrome c oxidase VIII family. As to quaternary structure, component of the cytochrome c oxidase (complex IV, CIV), a multisubunit enzyme composed of 14 subunits. The complex is composed of a catalytic core of 3 subunits MT-CO1, MT-CO2 and MT-CO3, encoded in the mitochondrial DNA, and 11 supernumerary subunits COX4I1 (or COX4I2), COX5A, COX5B, COX6A2 (or COX6A1), COX6B1 (or COX6B2), COX6C, COX7A1 (or COX7A2), COX7B, COX7C, COX8B and NDUFA4, which are encoded in the nuclear genome. The complex exists as a monomer or a dimer and forms supercomplexes (SCs) in the inner mitochondrial membrane with NADH-ubiquinone oxidoreductase (complex I, CI) and ubiquinol-cytochrome c oxidoreductase (cytochrome b-c1 complex, complex III, CIII), resulting in different assemblies (supercomplex SCI(1)III(2)IV(1) and megacomplex MCI(2)III(2)IV(2)).

Its subcellular location is the mitochondrion inner membrane. It functions in the pathway energy metabolism; oxidative phosphorylation. In terms of biological role, component of the cytochrome c oxidase, the last enzyme in the mitochondrial electron transport chain which drives oxidative phosphorylation. The respiratory chain contains 3 multisubunit complexes succinate dehydrogenase (complex II, CII), ubiquinol-cytochrome c oxidoreductase (cytochrome b-c1 complex, complex III, CIII) and cytochrome c oxidase (complex IV, CIV), that cooperate to transfer electrons derived from NADH and succinate to molecular oxygen, creating an electrochemical gradient over the inner membrane that drives transmembrane transport and the ATP synthase. Cytochrome c oxidase is the component of the respiratory chain that catalyzes the reduction of oxygen to water. Electrons originating from reduced cytochrome c in the intermembrane space (IMS) are transferred via the dinuclear copper A center (CU(A)) of subunit 2 and heme A of subunit 1 to the active site in subunit 1, a binuclear center (BNC) formed by heme A3 and copper B (CU(B)). The BNC reduces molecular oxygen to 2 water molecules using 4 electrons from cytochrome c in the IMS and 4 protons from the mitochondrial matrix. The sequence is that of Cytochrome c oxidase subunit 8B, mitochondrial (COX8B) from Bos taurus (Bovine).